Consider the following 185-residue polypeptide: Large ribosomal subunit protein uL5 (185 aa).

Belongs to the universal ribosomal protein uL5 family. In terms of assembly, part of the 50S ribosomal subunit; part of the 5S rRNA/L5/L18/L25 subcomplex. Contacts the 5S rRNA and the P site tRNA. Forms a bridge to the 30S subunit in the 70S ribosome.

In terms of biological role, this is one of the proteins that bind and probably mediate the attachment of the 5S RNA into the large ribosomal subunit, where it forms part of the central protuberance. In the 70S ribosome it contacts protein S13 of the 30S subunit (bridge B1b), connecting the 2 subunits; this bridge is implicated in subunit movement. Contacts the P site tRNA; the 5S rRNA and some of its associated proteins might help stabilize positioning of ribosome-bound tRNAs. The chain is Large ribosomal subunit protein uL5 from Rhodopseudomonas palustris (strain BisA53).